The primary structure comprises 137 residues: Ribosome-binding factor A (137 aa).

The segment at 114–137 (QLIDEARAEDRELRPEDDETGNNE) is disordered. Basic and acidic residues predominate over residues 117 to 127 (DEARAEDRELR). A compositionally biased stretch (acidic residues) spans 128-137 (PEDDETGNNE).

Belongs to the RbfA family. Monomer. Binds 30S ribosomal subunits, but not 50S ribosomal subunits or 70S ribosomes.

The protein resides in the cytoplasm. In terms of biological role, one of several proteins that assist in the late maturation steps of the functional core of the 30S ribosomal subunit. Associates with free 30S ribosomal subunits (but not with 30S subunits that are part of 70S ribosomes or polysomes). Required for efficient processing of 16S rRNA. May interact with the 5'-terminal helix region of 16S rRNA. In Alcanivorax borkumensis (strain ATCC 700651 / DSM 11573 / NCIMB 13689 / SK2), this protein is Ribosome-binding factor A.